A 655-amino-acid chain; its full sequence is DNA topoisomerase 4 subunit B (655 aa).

Residues Tyr-9, Asn-49, Asp-76, 116–122, and Lys-340 each bind ATP; that span reads GLHGVGA. Over residues 387–397 the composition is skewed to basic and acidic residues; it reads AARKAREEARS. Residues 387-419 form a disordered region; it reads AARKAREEARSGKKRKKSEATLSGKLTPAGSRN. The Toprim domain maps to 423-537; it reads NELYLVEGDS…HGKVFIALPP (115 aa). Residues Glu-429, Asp-502, and Asp-504 each coordinate Mg(2+).

This sequence belongs to the type II topoisomerase family. ParE type 2 subfamily. Heterotetramer composed of ParC and ParE. Mg(2+) is required as a cofactor. The cofactor is Mn(2+). It depends on Ca(2+) as a cofactor.

It carries out the reaction ATP-dependent breakage, passage and rejoining of double-stranded DNA.. Its function is as follows. Topoisomerase IV is essential for chromosome segregation. It relaxes supercoiled DNA. Performs the decatenation events required during the replication of a circular DNA molecule. This Bacillus subtilis (strain 168) protein is DNA topoisomerase 4 subunit B.